A 461-amino-acid polypeptide reads, in one-letter code: MSSNPFIGLRNWIRGAQQWYLTTPKRALQEAYEAALKIRAIELEHFDGQPISPLNLPVGEVSSYFETELKQLLKTIRMRMMEFRASRQILPLAPFQSPPTPVNEGINGATETYTVTATVSSTTAEPSVYEKLRVIDATLNRYKRQREKELDALARPSLSRQDPQQRQQAAALDKIAEDSLYLSEYISDDLTSDSKLDSSSFIPRSILRTADRFRRELNSDEATEAEVVRDFRTSKLRTRLAVRFMLLLVILPLLTQQISKALIVSPLVNHFKAVGQIERIINSQLEDNILDELARFENKIRFESLVSNVPIAPEEIQNRIREKAIELSTEYQKELIEPLKNILSDALGFTVFLALVFTGQRQLAIVKTFLDEVVYGLSDSAKAFMIILFTDVFVGFHSPHGWEVLVNNTLEHFGFPRNEDFINMFIATFPVMLDTVFKYWIFRYLNQISPSAVATYKNMNE.

4 helical membrane-spanning segments follow: residues 244–264, 339–359, 386–406, and 421–441; these read FMLL…ALIV, LKNI…VFTG, IILF…EVLV, and FINM…KYWI.

It belongs to the CemA family.

The protein resides in the cell inner membrane. Functionally, required for H(+) efflux immediately after light irradiation to form a rapid H(+) concentration gradient across the thylakoid membranes. Together with PxcL, contributes to transient H(+) uptake following dark to light transition. The protein is Proton extrusion protein PxcA of Thermosynechococcus vestitus (strain NIES-2133 / IAM M-273 / BP-1).